A 125-amino-acid polypeptide reads, in one-letter code: Small ribosomal subunit protein uS13 (125 aa).

This sequence belongs to the universal ribosomal protein uS13 family. Part of the 30S ribosomal subunit. Forms a loose heterodimer with protein S19. Forms two bridges to the 50S subunit in the 70S ribosome.

In terms of biological role, located at the top of the head of the 30S subunit, it contacts several helices of the 16S rRNA. In the 70S ribosome it contacts the 23S rRNA (bridge B1a) and protein L5 of the 50S subunit (bridge B1b), connecting the 2 subunits; these bridges are implicated in subunit movement. Contacts the tRNAs in the A and P-sites. The sequence is that of Small ribosomal subunit protein uS13 from Rickettsia akari (strain Hartford).